A 259-amino-acid polypeptide reads, in one-letter code: Proteasome subunit alpha (259 aa).

Residues 222–259 are disordered; sequence RITGPALEQLIPAEPAPASEPAPESKPDTETKPADPQD. Positions 244–259 are enriched in basic and acidic residues; the sequence is PESKPDTETKPADPQD.

It belongs to the peptidase T1A family. In terms of assembly, the 20S proteasome core is composed of 14 alpha and 14 beta subunits that assemble into four stacked heptameric rings, resulting in a barrel-shaped structure. The two inner rings, each composed of seven catalytic beta subunits, are sandwiched by two outer rings, each composed of seven alpha subunits. The catalytic chamber with the active sites is on the inside of the barrel. Has a gated structure, the ends of the cylinder being occluded by the N-termini of the alpha-subunits. Is capped by the proteasome-associated ATPase, ARC.

Its subcellular location is the cytoplasm. Its pathway is protein degradation; proteasomal Pup-dependent pathway. Its activity is regulated as follows. The formation of the proteasomal ATPase ARC-20S proteasome complex, likely via the docking of the C-termini of ARC into the intersubunit pockets in the alpha-rings, may trigger opening of the gate for substrate entry. Interconversion between the open-gate and close-gate conformations leads to a dynamic regulation of the 20S proteasome proteolysis activity. Functionally, component of the proteasome core, a large protease complex with broad specificity involved in protein degradation. The protein is Proteasome subunit alpha of Rhodococcus jostii (strain RHA1).